The chain runs to 99 residues: DNA-directed RNA polymerase subunit omega (99 aa).

A disordered region spans residues 55 to 99 (EAGTVISDPNPEEKRERLRIEREERKRQREQEQKELENRLRDEKN). The segment covering 65-99 (PEEKRERLRIEREERKRQREQEQKELENRLRDEKN) has biased composition (basic and acidic residues).

It belongs to the RNA polymerase subunit omega family. As to quaternary structure, the RNAP catalytic core consists of 2 alpha, 1 beta, 1 beta' and 1 omega subunit. When a sigma factor is associated with the core the holoenzyme is formed, which can initiate transcription.

The catalysed reaction is RNA(n) + a ribonucleoside 5'-triphosphate = RNA(n+1) + diphosphate. Promotes RNA polymerase assembly. Latches the N- and C-terminal regions of the beta' subunit thereby facilitating its interaction with the beta and alpha subunits. The sequence is that of DNA-directed RNA polymerase subunit omega from Enterococcus faecalis (strain ATCC 700802 / V583).